Here is a 341-residue protein sequence, read N- to C-terminus: MKRKVLRVIDGETVFPPPIWMMRQAGRYLPEYRETRKKAGSFLDLCYSPDLAVEVTLQPIRRFGFDAAILFSDILVIPHALGRDLRFEEGKGPLMTPIDADEIFWLETEGVAKRLEPVYETVRLLREQLPDETTLLGFCGAPWTVATYMIAGHGTPDQAPARLFAYRFPEAFEKLLNDLADVSAEYLIEQLDAGADAVQIFDSWSGVLDEDCFERFCIRPVARIVQKVRAVYPEARIIGFPKGAGMLYAGYREKTGVDALGLDWSVPFSFAAALQEEGAIQGNLDPLRVVAGGNALDEGVDTILERLGQGPLIFNLGHGITPQAPIENVQRMIDRIRGGKS.

Substrate contacts are provided by residues 23-27 (RQAGR), D73, Y148, S203, and H318.

It belongs to the uroporphyrinogen decarboxylase family. In terms of assembly, homodimer.

Its subcellular location is the cytoplasm. It carries out the reaction uroporphyrinogen III + 4 H(+) = coproporphyrinogen III + 4 CO2. It participates in porphyrin-containing compound metabolism; protoporphyrin-IX biosynthesis; coproporphyrinogen-III from 5-aminolevulinate: step 4/4. Its function is as follows. Catalyzes the decarboxylation of four acetate groups of uroporphyrinogen-III to yield coproporphyrinogen-III. The protein is Uroporphyrinogen decarboxylase of Brucella anthropi (strain ATCC 49188 / DSM 6882 / CCUG 24695 / JCM 21032 / LMG 3331 / NBRC 15819 / NCTC 12168 / Alc 37) (Ochrobactrum anthropi).